We begin with the raw amino-acid sequence, 298 residues long: Homoserine kinase (298 aa).

83–93 (PISRGLGSSSS) contributes to the ATP binding site.

The protein belongs to the GHMP kinase family. Homoserine kinase subfamily.

The protein localises to the cytoplasm. The enzyme catalyses L-homoserine + ATP = O-phospho-L-homoserine + ADP + H(+). Its pathway is amino-acid biosynthesis; L-threonine biosynthesis; L-threonine from L-aspartate: step 4/5. Functionally, catalyzes the ATP-dependent phosphorylation of L-homoserine to L-homoserine phosphate. The sequence is that of Homoserine kinase from Clostridium botulinum (strain Eklund 17B / Type B).